We begin with the raw amino-acid sequence, 329 residues long: DNA-directed RNA polymerase subunit alpha (329 aa).

Residues 1–235 form an alpha N-terminal domain (alpha-NTD) region; sequence MQGSVTEFLK…EQLDAFVDLR (235 aa). The tract at residues 249 to 329 is alpha C-terminal domain (alpha-CTD); sequence FDPILLRPVD…NWPPASIAED (81 aa).

Belongs to the RNA polymerase alpha chain family. In terms of assembly, homodimer. The RNAP catalytic core consists of 2 alpha, 1 beta, 1 beta' and 1 omega subunit. When a sigma factor is associated with the core the holoenzyme is formed, which can initiate transcription.

It catalyses the reaction RNA(n) + a ribonucleoside 5'-triphosphate = RNA(n+1) + diphosphate. Its function is as follows. DNA-dependent RNA polymerase catalyzes the transcription of DNA into RNA using the four ribonucleoside triphosphates as substrates. This chain is DNA-directed RNA polymerase subunit alpha, found in Actinobacillus succinogenes (strain ATCC 55618 / DSM 22257 / CCUG 43843 / 130Z).